The sequence spans 173 residues: Small ribosomal subunit protein uS5 (173 aa).

Residues 17–80 (WQERVIQIRR…ADGKKQLIEV (64 aa)) enclose the S5 DRBM domain.

It belongs to the universal ribosomal protein uS5 family. As to quaternary structure, part of the 30S ribosomal subunit. Contacts proteins S4 and S8.

With S4 and S12 plays an important role in translational accuracy. Its function is as follows. Located at the back of the 30S subunit body where it stabilizes the conformation of the head with respect to the body. The sequence is that of Small ribosomal subunit protein uS5 from Microcystis aeruginosa (strain NIES-843 / IAM M-2473).